The primary structure comprises 910 residues: DNA mismatch repair protein MutS (910 aa).

Residues 1–15 (MPRSAAQSEEQTLQG) show a composition bias toward polar residues. The interval 1–94 (MPRSAAQSEE…EPAWAHHSQV (94 aa)) is disordered. Low complexity predominate over residues 44-54 (DASLSADAAAR). An ATP-binding site is contributed by 726–733 (GPNASGKS).

Belongs to the DNA mismatch repair MutS family.

In terms of biological role, this protein is involved in the repair of mismatches in DNA. It is possible that it carries out the mismatch recognition step. This protein has a weak ATPase activity. The protein is DNA mismatch repair protein MutS of Synechococcus sp. (strain WH7803).